Reading from the N-terminus, the 473-residue chain is MLRFRCILSTSRSIMSGVKEFDYLVIGGGSGGIASARRAREFGVSVGLIESGRLGGTCVNVGCVPKKVMYNCSLHAEFIRDHADYGFDVTLNKFDWKVIKKSRDEYIKRLNGLYESGLKGSSVEYIRGRATFAEDGTVEVNGAKYRGKNTLIAVGGKPTIPNIKGAEHGIDSDGFFDLEDLPSRTVVVGAGYIAVEIAGVLANLGSDTHLLIRYDKVLRTFDKMLSDELTADMDEETNPLHLHKNTQVTEVIKGDDGLLTIKTTTGVIEKVQTLIWAIGRDPLTKELNLERVGVKTDKSGHIIVDEYQNTSAPGILSVGDDTGKFLLTPVAIAAGRRLSHRLFNGETDNKLTYENIATVVFSHPLIGTVGLTEAEAVEKYGKDEVTLYKSRFNPMLFAVTKHKEKAAMKLVCVGKDEKVVGVHVFGVGSDEMLQGFAVAVTMGATKKQFDQTVAIHPTSAEELVTMRGGVKPE.

Serine 30 and glycine 31 together coordinate FAD. Residue serine 30 coordinates glutathione. Arginine 37 contributes to the glutathione binding site. Positions 50, 57, 58, and 66 each coordinate FAD. A disulfide bond links cysteine 58 and cysteine 63. Residue tyrosine 114 participates in glutathione binding. Alanine 130 is an FAD binding site. Positions 190, 193, 196, 213, 219, and 279 each coordinate NADP(+). Residue aspartate 320 participates in FAD binding. An NADP(+)-binding site is contributed by leucine 326. Threonine 328 contacts FAD. Arginine 336 provides a ligand contact to glutathione. NADP(+) is bound at residue valine 359. FAD is bound at residue histidine 456. The active-site Proton acceptor is the histidine 456.

The protein belongs to the class-I pyridine nucleotide-disulfide oxidoreductase family. Requires FAD as cofactor. Expressed at all larval stages and in adults in intestine, vulva muscle, pharynx and some cells in the tail.

It is found in the cytoplasm. Its subcellular location is the mitochondrion. It catalyses the reaction 2 glutathione + NADP(+) = glutathione disulfide + NADPH + H(+). Its function is as follows. Catalyzes the reduction of glutathione disulfide (GSSG) to reduced glutathione (GSH). Constitutes the major mechanism to maintain a high GSH:GSSG ratio in the cytosol. Involved in resistance to oxidative stress and starvation. Together with thioredoxin reductase txtr-1, required for the reduction of disulfide groups in the cuticle during molting. This Caenorhabditis elegans protein is Glutathione reductase, mitochondrial.